Reading from the N-terminus, the 160-residue chain is Transcriptional repressor NrdR (160 aa).

Polar residues predominate over residues 1 to 11; it reads MRCPNCNSLDT. The tract at residues 1 to 20 is disordered; it reads MRCPNCNSLDTQVKDSRPTE. A zinc finger lies at 3 to 34; the sequence is CPNCNSLDTQVKDSRPTEDSSVIRRRRVCIAC. The 91-residue stretch at 49 to 139 folds into the ATP-cone domain; sequence LTVIKRNGRR…VYRNFREAKD (91 aa).

The protein belongs to the NrdR family. The cofactor is Zn(2+).

Negatively regulates transcription of bacterial ribonucleotide reductase nrd genes and operons by binding to NrdR-boxes. The protein is Transcriptional repressor NrdR of Rhodopseudomonas palustris (strain BisB5).